A 272-amino-acid polypeptide reads, in one-letter code: Energy-coupling factor transporter ATP-binding protein EcfA1 (272 aa).

In terms of domain architecture, ABC transporter spans 2–237 (IKVSDVCFSY…KNIIEKAKID (236 aa)). An ATP-binding site is contributed by 37–44 (GHNGSGKS).

Belongs to the ABC transporter superfamily. Energy-coupling factor EcfA family. Forms a stable energy-coupling factor (ECF) transporter complex composed of 2 membrane-embedded substrate-binding proteins (S component), 2 ATP-binding proteins (A component) and 2 transmembrane proteins (T component).

It is found in the cell membrane. In terms of biological role, ATP-binding (A) component of a common energy-coupling factor (ECF) ABC-transporter complex. Unlike classic ABC transporters this ECF transporter provides the energy necessary to transport a number of different substrates. This chain is Energy-coupling factor transporter ATP-binding protein EcfA1, found in Mesomycoplasma hyopneumoniae (strain J / ATCC 25934 / NCTC 10110) (Mycoplasma hyopneumoniae).